The primary structure comprises 445 residues: Tubulin beta-1 chain (445 aa).

Gln-11, Glu-69, Ser-138, Gly-142, Thr-143, Gly-144, Asn-204, and Asn-226 together coordinate GTP. Glu-69 serves as a coordination point for Mg(2+). The disordered stretch occupies residues 422–445; that stretch reads QYQDAGMDDEYGEEYEDEAPAEEE. Residues 427–445 are compositionally biased toward acidic residues; it reads GMDDEYGEEYEDEAPAEEE.

The protein belongs to the tubulin family. In terms of assembly, dimer of alpha and beta chains. A typical microtubule is a hollow water-filled tube with an outer diameter of 25 nm and an inner diameter of 15 nM. Alpha-beta heterodimers associate head-to-tail to form protofilaments running lengthwise along the microtubule wall with the beta-tubulin subunit facing the microtubule plus end conferring a structural polarity. Microtubules usually have 13 protofilaments but different protofilament numbers can be found in some organisms and specialized cells. Mg(2+) serves as cofactor.

Its subcellular location is the cytoplasm. The protein resides in the cytoskeleton. Functionally, tubulin is the major constituent of microtubules, a cylinder consisting of laterally associated linear protofilaments composed of alpha- and beta-tubulin heterodimers. Microtubules grow by the addition of GTP-tubulin dimers to the microtubule end, where a stabilizing cap forms. Below the cap, tubulin dimers are in GDP-bound state, owing to GTPase activity of alpha-tubulin. The sequence is that of Tubulin beta-1 chain (TUB1) from Colletotrichum graminicola (Maize anthracnose fungus).